Consider the following 211-residue polypeptide: ATP phosphoribosyltransferase (211 aa).

Belongs to the ATP phosphoribosyltransferase family. Short subfamily. As to quaternary structure, heteromultimer composed of HisG and HisZ subunits.

Its subcellular location is the cytoplasm. The enzyme catalyses 1-(5-phospho-beta-D-ribosyl)-ATP + diphosphate = 5-phospho-alpha-D-ribose 1-diphosphate + ATP. It functions in the pathway amino-acid biosynthesis; L-histidine biosynthesis; L-histidine from 5-phospho-alpha-D-ribose 1-diphosphate: step 1/9. Functionally, catalyzes the condensation of ATP and 5-phosphoribose 1-diphosphate to form N'-(5'-phosphoribosyl)-ATP (PR-ATP). Has a crucial role in the pathway because the rate of histidine biosynthesis seems to be controlled primarily by regulation of HisG enzymatic activity. In Bacillus cereus (strain ATCC 14579 / DSM 31 / CCUG 7414 / JCM 2152 / NBRC 15305 / NCIMB 9373 / NCTC 2599 / NRRL B-3711), this protein is ATP phosphoribosyltransferase.